The primary structure comprises 475 residues: MGSQLIPATAPWDSVPAQEQLFVLITGANSGIGLSIGERLIDEFLATRSLRSHLILIPTTRSKSKSLQTIKALRDYARKAAQTSQALQSRVGSSYRWQDTVARVHVLSLQVDLCDLRGVYAFADALVHGPVSNPEGLEGEYLKNVRIPRLDTVVFNAAYGGWSGVNYPKAIWVILTEGLVQSVTWPSYKMALPTARLNDKANYDYPKEPPLGEVFTACVFGHYVLAHELLPLLCRQSETETPGRLIWSSSLEAIERVLDMSDFQGFKCDGPYESAKRVTDILSLTATLPASLPSSNRFFTPDDPAEARAKPIRPRMYLTHPGIVASTLFPVPWFFMWAYELALLISRWIGSPWHNTDSYTGAKSPVWIALQEQSALDELDAERIKWGSSSNRHMQVEVKKTEVEGWGWEGKVEDAAALNADTAVGVFKKTVGRKRGAVDVTKEDIVKFEELGAESWKNMEDMRHEWENILGVKKA.

4 residues coordinate NADP(+): isoleucine 32, isoleucine 55, threonine 59, and lysine 65. Active-site proton donor residues include serine 249 and tyrosine 272. The NADP(+) site is built by tyrosine 272, lysine 276, valine 324, and serine 326. The active-site Lowers pKa of active site Tyr is lysine 276.

Belongs to the short-chain dehydrogenases/reductases (SDR) family. ERG27 subfamily. In terms of assembly, heterotetramer of ERG25, ERG26, ERG27 and ERG28. ERG28 acts as a scaffold to tether ERG27 and other 4,4-demethylation-related enzymes, forming a demethylation enzyme complex, in the endoplasmic reticulum.

It localises to the endoplasmic reticulum membrane. It is found in the lipid droplet. The protein operates within steroid metabolism; ergosterol biosynthesis. Functionally, 3-keto-steroid reductase; part of the third module of ergosterol biosynthesis pathway that includes the late steps of the pathway. ERG27 is a catalytic component of the C-4 demethylation complex that catalyzes the conversion of 4,4-dimethylfecosterol into fecosterol via 4-methylfecosterol. The third module or late pathway involves the ergosterol synthesis itself through consecutive reactions that mainly occur in the endoplasmic reticulum (ER) membrane. Firstly, the squalene synthase ERG9 catalyzes the condensation of 2 farnesyl pyrophosphate moieties to form squalene, which is the precursor of all steroids. Squalene synthase is crucial for balancing the incorporation of farnesyl diphosphate (FPP) into sterol and nonsterol isoprene synthesis. Secondly, squalene is converted into lanosterol by the consecutive action of the squalene epoxidase ERG1 and the lanosterol synthase ERG7. Then, the delta(24)-sterol C-methyltransferase ERG6 methylates lanosterol at C-24 to produce eburicol. Eburicol is the substrate of the sterol 14-alpha demethylase encoded by CYP51A, CYP51B and CYP51C, to yield 4,4,24-trimethyl ergosta-8,14,24(28)-trienol. CYP51B encodes the enzyme primarily responsible for sterol 14-alpha-demethylation, and plays an essential role in ascospore formation. CYP51A encodes an additional sterol 14-alpha-demethylase, induced on ergosterol depletion and responsible for the intrinsic variation in azole sensitivity. The third CYP51 isoform, CYP51C, does not encode a sterol 14-alpha-demethylase, but is required for full virulence on host wheat ears. The C-14 reductase ERG24 then reduces the C14=C15 double bond which leads to 4,4-dimethylfecosterol. A sequence of further demethylations at C-4, involving the C-4 demethylation complex containing the C-4 methylsterol oxidases ERG25, the sterol-4-alpha-carboxylate 3-dehydrogenase ERG26 and the 3-keto-steroid reductase ERG27, leads to the production of fecosterol via 4-methylfecosterol. ERG28 has a role as a scaffold to help anchor ERG25, ERG26 and ERG27 to the endoplasmic reticulum. The C-8 sterol isomerase ERG2 then catalyzes the reaction which results in unsaturation at C-7 in the B ring of sterols and thus converts fecosterol to episterol. The sterol-C5-desaturases ERG3A and ERG3BB then catalyze the introduction of a C-5 double bond in the B ring to produce 5-dehydroepisterol. The C-22 sterol desaturases ERG5A and ERG5B further convert 5-dehydroepisterol into ergosta-5,7,22,24(28)-tetraen-3beta-ol by forming the C-22(23) double bond in the sterol side chain. Finally, ergosta-5,7,22,24(28)-tetraen-3beta-ol is substrate of the C-24(28) sterol reductase ERG4 to produce ergosterol. The sequence is that of 3-keto-steroid reductase ERG27 from Gibberella zeae (strain ATCC MYA-4620 / CBS 123657 / FGSC 9075 / NRRL 31084 / PH-1) (Wheat head blight fungus).